The chain runs to 540 residues: Chaperonin GroEL (540 aa).

ATP-binding positions include 29–32, 86–90, glycine 413, 477–479, and aspartate 493; these read TLGP, DGTTT, and DAL.

The protein belongs to the chaperonin (HSP60) family. In terms of assembly, forms a cylinder of 14 subunits composed of two heptameric rings stacked back-to-back. Interacts with the co-chaperonin GroES.

It is found in the cytoplasm. It carries out the reaction ATP + H2O + a folded polypeptide = ADP + phosphate + an unfolded polypeptide.. In terms of biological role, together with its co-chaperonin GroES, plays an essential role in assisting protein folding. The GroEL-GroES system forms a nano-cage that allows encapsulation of the non-native substrate proteins and provides a physical environment optimized to promote and accelerate protein folding. The polypeptide is Chaperonin GroEL (Clostridium botulinum (strain Eklund 17B / Type B)).